Here is a 1522-residue protein sequence, read N- to C-terminus: Lysine-specific demethylase 5B (1522 aa).

The JmjN domain maps to 10–51 (CPVFEPSWEEFADPFAFIHKIRPIAEQTGICKVRPPPDWQPP). Positions 75-165 (TRVKLNFLDQ…ILYPYNLFQS (91 aa)) constitute an ARID domain. Basic and acidic residues predominate over residues 180 to 192 (DTKDKEYKPHDIP). The interval 180 to 229 (DTKDKEYKPHDIPQRQSVQPSESCPPARRAKRLRAEATNIKTESDSPEVR) is disordered. The segment at 284–334 (LYVCLLCGSGNDEDRLLLCDGCDDSYHTFCLIPPLHDVPKGDWRCPQCLAQ) adopts a PHD-type 1 zinc-finger fold. 2-oxoglutarate is bound at residue Y400. In terms of domain architecture, JmjC spans 428-594 (EYLDSGWNLN…LGRQCIEHYR (167 aa)). Fe cation contacts are provided by H474 and E476. 2-oxoglutarate is bound by residues S482, N484, and K492. Fe cation is bound at residue H562. A C5HC2 zinc finger spans residues 667 to 719 (CYKCKTTCFMSAVYCPCKPGLLVCLYHVEDLCSCPTYQYKLGYRYTLEELYPM). The segment at 1151-1199 (LKVCVCQKEPAAPMIQCELCRGFFHTGCVSVPHALQGPRVWLCPQCRRS) adopts a PHD-type 2 zinc-finger fold. Positions 1353–1365 (LQAEQKPSVGPSN) are enriched in polar residues. 2 disordered regions span residues 1353–1373 (LQAEQKPSVGPSNEKSECCRG) and 1400–1460 (ARVR…DSED). Residues 1400 to 1416 (ARVRKMRTPKKKKLKLS) are compositionally biased toward basic residues. Over residues 1426–1442 (RMERERERLLEAQRSSE) the composition is skewed to basic and acidic residues. The segment at 1462–1516 (DAICPAVTCLQPEGEEVDWVQCDGSCNQWFHQVCVGISPEMAEKEDYICASCAGK) adopts a PHD-type 3 zinc-finger fold.

This sequence belongs to the JARID1 histone demethylase family. Fe(2+) is required as a cofactor.

Its subcellular location is the nucleus. The catalysed reaction is N(6),N(6),N(6)-trimethyl-L-lysyl(4)-[histone H3] + 3 2-oxoglutarate + 3 O2 = L-lysyl(4)-[histone H3] + 3 formaldehyde + 3 succinate + 3 CO2. Its function is as follows. Histone demethylase that demethylates 'Lys-4' of histone H3, thereby playing a central role in histone code. Does not demethylate histone H3 'Lys-9' or H3 'Lys-27'. Demethylates trimethylated, dimethylated and monomethylated H3 'Lys-4'. Acts as a transcriptional corepressor. May repress the CLOCK-BMAL1 heterodimer-mediated transcriptional activation of the core clock component PER2. The sequence is that of Lysine-specific demethylase 5B (KDM5B) from Gallus gallus (Chicken).